The sequence spans 122 residues: uncharacterized protein (122 aa).

It belongs to the IIV-6 115R family.

This is an uncharacterized protein from Acheta domesticus (House cricket).